The following is a 102-amino-acid chain: NADH-quinone oxidoreductase subunit K (102 aa).

3 consecutive transmembrane segments (helical) span residues 6-26 (MEHG…GLMV), 30-50 (ILFI…AFVV), and 62-82 (VMFI…LAIL).

Belongs to the complex I subunit 4L family. As to quaternary structure, NDH-1 is composed of 13 different subunits. Subunits NuoA, H, J, K, L, M, N constitute the membrane sector of the complex.

The protein localises to the cell inner membrane. It carries out the reaction a quinone + NADH + 5 H(+)(in) = a quinol + NAD(+) + 4 H(+)(out). Its function is as follows. NDH-1 shuttles electrons from NADH, via FMN and iron-sulfur (Fe-S) centers, to quinones in the respiratory chain. The immediate electron acceptor for the enzyme in this species is believed to be ubiquinone. Couples the redox reaction to proton translocation (for every two electrons transferred, four hydrogen ions are translocated across the cytoplasmic membrane), and thus conserves the redox energy in a proton gradient. The protein is NADH-quinone oxidoreductase subunit K of Ectopseudomonas mendocina (strain ymp) (Pseudomonas mendocina).